Consider the following 244-residue polypeptide: Phosphatidylinositol phosphate synthase (244 aa).

The next 3 membrane-spanning stretches (helical) occupy residues 24 to 42 (YARA…FLIR), 49 to 66 (TVTL…LVFY), and 72 to 91 (FWGT…DGNM). 48–51 (DTVT) lines the a CDP-1,2-diacyl-sn-glycerol pocket. 2 residues coordinate Mg(2+): Asp85 and Asp88. A CDP-1,2-diacyl-sn-glycerol-binding residues include Gly89, Arg93, and Ser99. 2 residues coordinate Mg(2+): Asp106 and Asp110. Asp110 (proton acceptor) is an active-site residue. 3 helical membrane passes run 117-137 (IFGG…LCAV), 174-190 (LVIS…HKFG), and 196-214 (VLLP…VTLI).

This sequence belongs to the CDP-alcohol phosphatidyltransferase class-I family. As to quaternary structure, homodimer. Mg(2+) is required as a cofactor.

Its subcellular location is the cell membrane. The catalysed reaction is a CDP-1,2-diacyl-sn-glycerol + 1D-myo-inositol 3-phosphate = a 1,2-diacyl-sn-glycero-3-phospho-(1D-myo-inositol-3-phosphate) + CMP + H(+). It carries out the reaction 1,2-di-(9Z-octadecenoyl)-sn-glycero-3-cytidine-5'-diphosphate + 1D-myo-inositol 3-phosphate = 1,2-di-(9Z-octadecenoyl)-sn-glycero-3-phospho-(1D-myo-inositol-3-phosphate) + CMP + H(+). It participates in phospholipid metabolism; phosphatidylinositol phosphate biosynthesis. Functionally, catalyzes the conjugation of the 1'-hydroxyl group of D-myo-inositol-3-phosphate (also named L-myo-inositol-1-phosphate) with a lipid tail of cytidine diphosphate diacylglycerol (CDP-DAG), forming phosphatidylinositol phosphate (PIP) and CMP. PIP is a precursor of phosphatidylinositol (PI) which is an essential lipid required for cell wall formation. This is Phosphatidylinositol phosphate synthase from Streptomyces avermitilis (strain ATCC 31267 / DSM 46492 / JCM 5070 / NBRC 14893 / NCIMB 12804 / NRRL 8165 / MA-4680).